The chain runs to 375 residues: Growth/differentiation factor 8 (375 aa).

The first 18 residues, Met1–Ala18, serve as a signal peptide directing secretion. A propeptide spanning residues Gly19–Arg266 is cleaved from the precursor. N-linked (GlcNAc...) asparagine glycans are attached at residues Asn48 and Asn71. 4 cysteine pairs are disulfide-bonded: Cys272–Cys282, Cys281–Cys340, Cys309–Cys372, and Cys313–Cys374.

It belongs to the TGF-beta family. As to quaternary structure, homodimer; disulfide-linked. Interacts with WFIKKN2, leading to inhibit its activity. Interacts with FSTL3. Post-translationally, synthesized as large precursor molecule that undergoes proteolytic cleavage to generate an N-terminal propeptide and a disulfide linked C-terminal dimer, which is the biologically active molecule. The circulating form consists of a latent complex of the C-terminal dimer and other proteins, including its propeptide, which maintain the C-terminal dimer in a latent, inactive state. Ligand activation requires additional cleavage of the prodomain by a tolloid-like metalloproteinase.

It localises to the secreted. Its function is as follows. Acts specifically as a negative regulator of skeletal muscle growth. This is Growth/differentiation factor 8 (MSTN) from Capra ibex (Ibex).